The sequence spans 202 residues: Transcription factor IBH1 (202 aa).

Residues 1–16 are compositionally biased toward pro residues; sequence MDAKRTPPPPTPPNPN. A disordered region spans residues 1 to 33; that stretch reads MDAKRTPPPPTPPNPNPSVIGSGAAADGGGFGR. The region spanning 136-185 is the bHLH domain; the sequence is TSAAARAVPPPPRQQGEPPRADALRRLVPGGAGMEYSSLLEETADYLRSL.

It belongs to the bHLH protein family. In terms of assembly, interacts with ILI1.

Functionally, atypical and probable non DNA-binding bHLH transcription factor that acts as a negative regulator of cell elongation and plant development. Binds the transcription factor ILI1 and forms a heterodimer of antagonistic bHLH transcription factors that function downstream of BZR1 to mediate brassinosteroid regulation of cell elongation and lamina inclination. The protein is Transcription factor IBH1 (IBH1) of Oryza sativa subsp. indica (Rice).